The chain runs to 321 residues: Gap junction delta-2 protein (321 aa).

The Cytoplasmic portion of the chain corresponds to 1–19 (MGEWTILERLLEAAVQQHS). The chain crosses the membrane as a helical span at residues 20 to 42 (TMIGRILLTVVVIFRILIVAIVG). Residues 43–75 (ETVYDDEQTMFVCNTLQPGCNQACYDRAFPISH) lie on the Extracellular side of the membrane. The helical transmembrane segment at 76 to 98 (IRYWVFQIIMVCTPSLCFITYSV) threads the bilayer. Topologically, residues 99-197 (HQSAKQRERR…KLRRQEGISR (99 aa)) are cytoplasmic. The tract at residues 117–141 (DRDPPESMGGPGGTGGGGSGGGKRE) is disordered. Over residues 125 to 137 (GGPGGTGGGGSGG) the composition is skewed to gly residues. Residues 198 to 220 (FYIIQVVFRNALEIGFLVGQYFL) traverse the membrane as a helical segment. Residues 221-252 (YGFSVPGLYECDRYPCIKEVECYVSRPTEKTV) lie on the Extracellular side of the membrane. The chain crosses the membrane as a helical span at residues 253 to 275 (FLVFMFAVSGICVVLNLAELNHL). Topologically, residues 276-321 (GWRKIKLAVRGAQAKRKSVYEIRNKDLPRVSVPNFGRTQSSDSAYV) are cytoplasmic.

This sequence belongs to the connexin family. Delta-type subfamily. A connexon is composed of a hexamer of connexins.

It is found in the cell membrane. It localises to the cell junction. The protein resides in the gap junction. One gap junction consists of a cluster of closely packed pairs of transmembrane channels, the connexons, through which materials of low MW diffuse from one cell to a neighboring cell. The chain is Gap junction delta-2 protein (GJD2) from Bos taurus (Bovine).